Consider the following 582-residue polypeptide: External alternative NADH-ubiquinone oxidoreductase, mitochondrial (582 aa).

Residues 1–30 (MLRLRPAVRAVSVARSVALTRSLHVSVAKF) constitute a mitochondrion transit peptide. A disordered region spans residues 46–65 (KQTAGHQGHHQEIPKPDENH). Residues 54 to 65 (HHQEIPKPDENH) are compositionally biased toward basic and acidic residues. 114–144 (TLVVLGSGWGSVSFLKKLDTSNYNVIVVSPR) is an FAD binding site. 277–313 (LHTVVVGGGPTGVEFAAELQDFFEDDLRKWIPDIRDD) contacts NAD(+). Residues 454-501 (LLNGIAKTEDLNNEITNLEKQSEHTFDEQERKNIFAQLESKSRKLRRS) are a coiled coil.

Belongs to the NADH dehydrogenase family. It depends on FAD as a cofactor.

The protein localises to the mitochondrion inner membrane. It catalyses the reaction a quinone + NADH + H(+) = a quinol + NAD(+). The enzyme catalyses a ubiquinone + NADH + H(+) = a ubiquinol + NAD(+). In terms of biological role, alternative NADH-ubiquinone oxidoreductase which catalyzes the oxidation of mitochondrial NADH does not translocate protons across the inner mitochondrial membrane. The protein is External alternative NADH-ubiquinone oxidoreductase, mitochondrial (NDH2) of Yarrowia lipolytica (strain CLIB 122 / E 150) (Yeast).